A 408-amino-acid chain; its full sequence is Two-pore potassium channel 5 (408 aa).

Disordered regions lie at residues 1–29 and 58–82; these read MEPL…SASI and QSVQ…SQTR. A compositionally biased stretch (low complexity) spans 15 to 29; the sequence is PIPENPSSSSSSASI. At 22–115 the chain is on the stromal side; sequence SSSSSASITI…TKKPSPVSKS (94 aa). Over residues 63-72 the composition is skewed to acidic residues; the sequence is DKEDQDSDSD. Residues 116 to 136 form a helical membrane-spanning segment; it reads IIRQAIFLLIVYLTLGVSIYS. Residues 152–171 constitute an intramembrane region (pore-forming); that stretch reads DALYFCIVTMCTIGYGDIAP. The helical transmembrane segment at 178-198 threads the bilayer; the sequence is IFAVVFVLFGFGFLDILLSGV. Over 199–248 the chain is Stromal; the sequence is VNYVLDLQESMILTGIQTRQHHQHHHHHRFSAKDYIIDFEKGRMRIRMKV. Residues 249-269 traverse the membrane as a helical segment; sequence CLALCVVVLCIGVGALVLHFV. An intramembrane region (pore-forming) is located at residues 276 to 295; sequence DSVYLSVMSVTTVGYGDRAF. A helical membrane pass occupies residues 302–322; that stretch reads LFAAVWLLVSTLAVARAFLYL. Over 323-408 the chain is Stromal; the sequence is AEARIDRRHR…TLPDLLGDPL (86 aa). 2 consecutive EF-hand domains span residues 339–374 and 378–408; these read LNRE…EMGK and KDID…GDPL. 6 residues coordinate Ca(2+): Asp352, Glu363, Asp391, Asn393, Lys397, and Asp402.

The protein belongs to the two pore domain potassium channel (TC 1.A.1.7) family. Homodimer. In terms of tissue distribution, expressed in hydathodes and the vascular tissues of roots, stems, leaves and flowers.

It is found in the vacuole membrane. Probable voltage-independent potassium-selective tonoplast ion channel. The polypeptide is Two-pore potassium channel 5 (TPK5) (Arabidopsis thaliana (Mouse-ear cress)).